The sequence spans 213 residues: Putative manganese efflux pump MntP (213 aa).

6 consecutive transmembrane segments (helical) span residues 3–23 (ILSIVLTGFGLAMDAFAVSVA), 36–56 (ALKVALFFGGFQALMPLIGWG), 67–87 (AFDHWIAFILLGFIGGKMIFE), 130–150 (LAIATSIDALAVGVSFAFLGI), 152–172 (IVQTIIIIGIITFVLCFLGVI), and 187–207 (IVGGVILILIGINILLEHTGI).

It belongs to the MntP (TC 9.B.29) family.

Its subcellular location is the cell membrane. Functionally, probably functions as a manganese efflux pump. This Clostridium perfringens (strain ATCC 13124 / DSM 756 / JCM 1290 / NCIMB 6125 / NCTC 8237 / Type A) protein is Putative manganese efflux pump MntP.